A 162-amino-acid chain; its full sequence is Small ribosomal subunit protein uS5 (162 aa).

In terms of domain architecture, S5 DRBM spans 7 to 70 (EEKMILIRRT…YARRNMVEVP (64 aa)).

The protein belongs to the universal ribosomal protein uS5 family. In terms of assembly, part of the 30S ribosomal subunit. Contacts proteins S4 and S8.

In terms of biological role, with S4 and S12 plays an important role in translational accuracy. Its function is as follows. Located at the back of the 30S subunit body where it stabilizes the conformation of the head with respect to the body. The polypeptide is Small ribosomal subunit protein uS5 (rpsE) (Thermus thermophilus (strain ATCC BAA-163 / DSM 7039 / HB27)).